A 417-amino-acid polypeptide reads, in one-letter code: Tryptophan synthase beta chain (417 aa).

The residue at position 110 (Lys110) is an N6-(pyridoxal phosphate)lysine.

It belongs to the TrpB family. In terms of assembly, tetramer of two alpha and two beta chains. It depends on pyridoxal 5'-phosphate as a cofactor.

The enzyme catalyses (1S,2R)-1-C-(indol-3-yl)glycerol 3-phosphate + L-serine = D-glyceraldehyde 3-phosphate + L-tryptophan + H2O. Its pathway is amino-acid biosynthesis; L-tryptophan biosynthesis; L-tryptophan from chorismate: step 5/5. Functionally, the beta subunit is responsible for the synthesis of L-tryptophan from indole and L-serine. This is Tryptophan synthase beta chain from Prochlorococcus marinus (strain NATL2A).